Consider the following 86-residue polypeptide: Small ribosomal subunit protein bS16 (86 aa).

Belongs to the bacterial ribosomal protein bS16 family.

The polypeptide is Small ribosomal subunit protein bS16 (Carboxydothermus hydrogenoformans (strain ATCC BAA-161 / DSM 6008 / Z-2901)).